We begin with the raw amino-acid sequence, 33 residues long: Alpha-amanitin proprotein (33 aa).

The propeptide occupies 1–10 (MSDINATRLP). Ile11 bears the (3R,4R)-4,5-dihydroxyisoleucine; in form alpha-amanitin mark. Ile11 bears the (3R,4S)-4-hydroxyisoleucine; in form gamma-amanitin mark. The cyclopeptide (Ile-Pro) cross-link spans 11-18 (IWGIGCNP). A cross-link (2'-cysteinyl-6'-hydroxytryptophan sulfoxide (Trp-Cys)) is located at residues 12 to 16 (WGIGC). Pro18 is subject to 4-hydroxyproline. The propeptide occupies 19–33 (SVGDEVTALLTSGEA).

The protein belongs to the MSDIN fungal toxin family. Processed by the macrocyclase-peptidase enzyme POPB to yield a toxic cyclic decapeptide. POPB first removes 10 residues from the N-terminus. Conformational trapping of the remaining peptide forces the enzyme to release this intermediate rather than proceed to macrocyclization. The enzyme rebinds the remaining peptide in a different conformation and catalyzes macrocyclization of the N-terminal 8 residues.

In terms of biological role, major toxin belonging to the bicyclic octapeptides amatoxins that acts by binding non-competitively to RNA polymerase II and greatly slowing the elongation of transcripts from target promoters. This Amanita fuliginea (East Asian brown death cap) protein is Alpha-amanitin proprotein.